The primary structure comprises 212 residues: Large ribosomal subunit protein uL3 (212 aa).

Glutamine 153 carries the N5-methylglutamine modification.

This sequence belongs to the universal ribosomal protein uL3 family. Part of the 50S ribosomal subunit. Forms a cluster with proteins L14 and L19. Post-translationally, methylated by PrmB.

Its function is as follows. One of the primary rRNA binding proteins, it binds directly near the 3'-end of the 23S rRNA, where it nucleates assembly of the 50S subunit. In Shewanella denitrificans (strain OS217 / ATCC BAA-1090 / DSM 15013), this protein is Large ribosomal subunit protein uL3.